A 437-amino-acid chain; its full sequence is Adenylosuccinate synthetase (437 aa).

Residues G12–K18 and G40–T42 each bind GTP. D13 (proton acceptor) is an active-site residue. 2 residues coordinate Mg(2+): D13 and G40. IMP is bound by residues D13–K16, N38–H41, T128, R142, Q223, T238, and R302. The active-site Proton donor is H41. Residue T298–R304 coordinates substrate. Residues R304, K330 to D332, and S412 to G414 each bind GTP.

The protein belongs to the adenylosuccinate synthetase family. Homodimer. It depends on Mg(2+) as a cofactor.

The protein resides in the cytoplasm. The catalysed reaction is IMP + L-aspartate + GTP = N(6)-(1,2-dicarboxyethyl)-AMP + GDP + phosphate + 2 H(+). Its pathway is purine metabolism; AMP biosynthesis via de novo pathway; AMP from IMP: step 1/2. Its function is as follows. Plays an important role in the de novo pathway of purine nucleotide biosynthesis. Catalyzes the first committed step in the biosynthesis of AMP from IMP. The protein is Adenylosuccinate synthetase of Synechococcus sp. (strain RCC307).